We begin with the raw amino-acid sequence, 119 residues long: Dihydroneopterin aldolase (119 aa).

Substrate-binding positions include Glu21, Tyr53, and 72 to 73 (IE). Lys99 serves as the catalytic Proton donor/acceptor.

It belongs to the DHNA family.

The enzyme catalyses 7,8-dihydroneopterin = 6-hydroxymethyl-7,8-dihydropterin + glycolaldehyde. It functions in the pathway cofactor biosynthesis; tetrahydrofolate biosynthesis; 2-amino-4-hydroxy-6-hydroxymethyl-7,8-dihydropteridine diphosphate from 7,8-dihydroneopterin triphosphate: step 3/4. In terms of biological role, catalyzes the conversion of 7,8-dihydroneopterin to 6-hydroxymethyl-7,8-dihydropterin. This is Dihydroneopterin aldolase (folB) from Streptococcus pyogenes serotype M6 (strain ATCC BAA-946 / MGAS10394).